The following is a 111-amino-acid chain: 4'-hydroxy-3'-methoxypropiophenone carrier protein ppsC (111 aa).

The tract at residues 1-21 (MSAQVMRPGTPQHEGQEFLSG) is disordered.

The protein operates within secondary metabolite biosynthesis. In terms of biological role, 4'-hydroxy-3'-methoxypropiophenone carrier protein; part of the gene cluster that mediates the biosynthesis of 2,4'-dihydroxy-3'-methoxypropiophenone. The first step of the pathway is the conversion of acetate into acetyl-CoA by the acyl-CoA ligase ppsA. Acetyl-CoA is then used as a starter unit by the polyketide synthase ppsB and condensed with 4 malonyl-CoA unit to produce the pentaketide backbone. During polyketide extension, the polykedite chain is probably reduced and dehydrated by the KR and PT domains, respectively. O-methylation seems to be catalyzed by an unknown methyltransferase rather than by the CMeT domain of ppsB. Two hydroxylations and one further decarboxylation step catalyzed by yet unknown enzymes are then required to yield 4'-hydroxy-3'-methoxypropiophenone. PpsC functions as a carrier protein to transport 4'-hydroxy-3'-methoxypropiophenone to a specific cell compartment in which 4'-hydroxy-3'-methoxypropiophenone is hydroxylated to 2,4'-dihydroxy-3'-methoxypropiophenone by a still to be identified enzyme. The protein is 4'-hydroxy-3'-methoxypropiophenone carrier protein ppsC of Aspergillus oryzae (strain ATCC 42149 / RIB 40) (Yellow koji mold).